The primary structure comprises 348 residues: Holliday junction branch migration complex subunit RuvB (348 aa).

Residues 4 to 184 (TDRLIAASGR…FGIVQRLEFY (181 aa)) form a large ATPase domain (RuvB-L) region. ATP-binding positions include isoleucine 23, arginine 24, glycine 65, lysine 68, threonine 69, threonine 70, 131–133 (EDF), arginine 174, tyrosine 184, and arginine 221. A Mg(2+)-binding site is contributed by threonine 69. Residues 185–255 (SNKDLATIVS…VADMALNLLD (71 aa)) form a small ATPAse domain (RuvB-S) region. The head domain (RuvB-H) stretch occupies residues 258–348 (ERGFDHSDRR…GGEYAAQDDE (91 aa)). Arginine 294, arginine 313, and arginine 318 together coordinate DNA.

It belongs to the RuvB family. As to quaternary structure, homohexamer. Forms an RuvA(8)-RuvB(12)-Holliday junction (HJ) complex. HJ DNA is sandwiched between 2 RuvA tetramers; dsDNA enters through RuvA and exits via RuvB. An RuvB hexamer assembles on each DNA strand where it exits the tetramer. Each RuvB hexamer is contacted by two RuvA subunits (via domain III) on 2 adjacent RuvB subunits; this complex drives branch migration. In the full resolvosome a probable DNA-RuvA(4)-RuvB(12)-RuvC(2) complex forms which resolves the HJ.

The protein localises to the cytoplasm. It catalyses the reaction ATP + H2O = ADP + phosphate + H(+). In terms of biological role, the RuvA-RuvB-RuvC complex processes Holliday junction (HJ) DNA during genetic recombination and DNA repair, while the RuvA-RuvB complex plays an important role in the rescue of blocked DNA replication forks via replication fork reversal (RFR). RuvA specifically binds to HJ cruciform DNA, conferring on it an open structure. The RuvB hexamer acts as an ATP-dependent pump, pulling dsDNA into and through the RuvAB complex. RuvB forms 2 homohexamers on either side of HJ DNA bound by 1 or 2 RuvA tetramers; 4 subunits per hexamer contact DNA at a time. Coordinated motions by a converter formed by DNA-disengaged RuvB subunits stimulates ATP hydrolysis and nucleotide exchange. Immobilization of the converter enables RuvB to convert the ATP-contained energy into a lever motion, pulling 2 nucleotides of DNA out of the RuvA tetramer per ATP hydrolyzed, thus driving DNA branch migration. The RuvB motors rotate together with the DNA substrate, which together with the progressing nucleotide cycle form the mechanistic basis for DNA recombination by continuous HJ branch migration. Branch migration allows RuvC to scan DNA until it finds its consensus sequence, where it cleaves and resolves cruciform DNA. The sequence is that of Holliday junction branch migration complex subunit RuvB from Pseudomonas entomophila (strain L48).